We begin with the raw amino-acid sequence, 297 residues long: MTEQQFHSGFVSIIGRPNVGKSTLLNKILGDKIVITSDKPQTTRNRIQGIHNLPGCQIVFIDTPGIHRAKSRLNKYMVDVALSSIKEVDVILFLVEADTKPANQEETILGALASAEAPVVLVINKVDLVAKESLLEKMAAYSGLYPFREVIPVSALTGDNTGRLVQVVRDLLPEGPPYFPDDILTDVPERFVVAEIVREKVFRLTHDEVPYSVAVVVESFKERDDGLILISAVINVERDSQKGIIIGRKGEMLKKIGMQARREIEELLDTRIFLELFVRVSREWSENKQMLKEFGYE.

Residues 7 to 174 form the Era-type G domain; that stretch reads HSGFVSIIGR…VQVVRDLLPE (168 aa). The interval 15-22 is G1; the sequence is GRPNVGKS. 15-22 serves as a coordination point for GTP; it reads GRPNVGKS. The tract at residues 41-45 is G2; it reads QTTRN. The tract at residues 62 to 65 is G3; it reads DTPG. GTP-binding positions include 62–66 and 124–127; these read DTPGI and NKVD. A G4 region spans residues 124-127; the sequence is NKVD. Residues 153–155 are G5; the sequence is VSA. The 78-residue stretch at 205 to 282 folds into the KH type-2 domain; sequence THDEVPYSVA…FLELFVRVSR (78 aa).

The protein belongs to the TRAFAC class TrmE-Era-EngA-EngB-Septin-like GTPase superfamily. Era GTPase family. Monomer.

Its subcellular location is the cytoplasm. It localises to the cell inner membrane. Functionally, an essential GTPase that binds both GDP and GTP, with rapid nucleotide exchange. Plays a role in 16S rRNA processing and 30S ribosomal subunit biogenesis and possibly also in cell cycle regulation and energy metabolism. The chain is GTPase Era from Geotalea daltonii (strain DSM 22248 / JCM 15807 / FRC-32) (Geobacter daltonii).